Consider the following 417-residue polypeptide: Ribonuclease T2-like (417 aa).

The first 22 residues, 1 to 22 (MSSISGFLGAIPGAQQILQTMA), serve as a signal peptide directing secretion. Disulfide bonds link Cys45-Cys63, Cys52-Cys99, Cys62-Cys165, Cys107-Cys157, and Cys229-Cys264. His92 is a catalytic residue. A glycan (N-linked (GlcNAc...) asparagine) is linked at Asn115. Catalysis depends on residues Glu150 and His154. The interval 274–296 (KTPNKDPGHGHEPTKTRHPHGPT) is disordered. Over residues 276–288 (PNKDPGHGHEPTK) the composition is skewed to basic and acidic residues. Asn383 carries an N-linked (GlcNAc...) asparagine glycan.

This sequence belongs to the RNase T2 family.

Its subcellular location is the vacuole lumen. The protein localises to the cytoplasm. It catalyses the reaction a ribonucleotidyl-ribonucleotide-RNA + H2O = a 3'-end 3'-phospho-ribonucleotide-RNA + a 5'-end dephospho-ribonucleoside-RNA + H(+). Its function is as follows. Rnase which modulates cell survival under stress conditions. Released from the vacuole to the cytoplasm during stress to promote tRNA and rRNA cleavage and to activate separately a downstream pathway that promotes cell death. Involved in cell size, vacuolar morphology and growth at high temperatures and high salt concentration. In Emericella nidulans (strain FGSC A4 / ATCC 38163 / CBS 112.46 / NRRL 194 / M139) (Aspergillus nidulans), this protein is Ribonuclease T2-like (rny1).